A 1710-amino-acid chain; its full sequence is Extracellular matrix protein A (1710 aa).

The signal sequence occupies residues 1–22; sequence MKISIFILLLFISSMVIISVNA. 66 Cys-rich CT repeats span residues 43-70, 71-94, 95-117, 118-141, 142-165, 166-189, 190-213, 214-237, 238-261, 262-285, 286-309, 310-333, 334-357, 358-381, 382-405, 406-429, 430-453, 454-477, 478-501, 502-525, 526-549, 550-573, 574-597, 598-621, 622-645, 646-669, 670-693, 694-717, 718-741, 742-765, 766-789, 790-813, 814-837, 838-861, 862-885, 886-909, 910-933, 934-957, 958-981, 982-1005, 1006-1029, 1030-1053, 1054-1077, 1078-1101, 1102-1125, 1126-1149, 1150-1173, 1174-1197, 1198-1221, 1222-1245, 1246-1269, 1270-1293, 1294-1317, 1318-1341, 1342-1365, 1366-1389, 1390-1413, 1414-1437, 1438-1461, 1462-1485, 1486-1509, 1511-1534, 1558-1581, 1582-1606, 1608-1632, and 1658-1682; these read NRWS…CDDE, NACT…VDDK, NPCT…CDDK, NACT…CDDN, NPCT…VDDN, NPCT…VDDL, NKCT…CDDN, NACT…CDDK, NQCT…TDDN, NKCT…TDDN, KACT…CDDN, NACT…CDDS, NKCT…CDDS, NACT…TDDN, NACT…CDDR, NPCT…TDDS, DKCT…CDDN, DACT…TDDN, NKCT…CDDG, NKCT…CPKP, DKCS…CTSD, NKCQ…CDDG, NACT…LPKN, NKCI…CECD, and NPKT…VITS. N-linked (GlcNAc...) asparagine glycans are attached at residues N150 and N151. N-linked (GlcNAc...) asparagine glycosylation is found at N270 and N271. Residue N415 is glycosylated (N-linked (GlcNAc...) asparagine). A glycan (N-linked (GlcNAc...) asparagine) is linked at N535. An N-linked (GlcNAc...) asparagine glycan is attached at N655. A glycan (N-linked (GlcNAc...) asparagine) is linked at N751. Residues N871, N894, and N895 are each glycosylated (N-linked (GlcNAc...) asparagine). N1015 is a glycosylation site (N-linked (GlcNAc...) asparagine). Residues N1110 and N1111 are each glycosylated (N-linked (GlcNAc...) asparagine). N-linked (GlcNAc...) asparagine glycosylation occurs at N1183. N-linked (GlcNAc...) asparagine glycosylation is present at N1255. N1351 carries an N-linked (GlcNAc...) asparagine glycan. The N-linked (GlcNAc...) asparagine glycan is linked to N1530. Residue N1624 is glycosylated (N-linked (GlcNAc...) asparagine).

It is found in the secreted. The polypeptide is Extracellular matrix protein A (ecmA) (Dictyostelium discoideum (Social amoeba)).